The chain runs to 380 residues: Pregnancy-associated glycoprotein 1 (380 aa).

The first 15 residues, 1 to 15 (MKWLVLLGLVAFSEC), serve as a signal peptide directing secretion. The propeptide at 16-53 (IVKIPLRRLKTMRNVVSGKNMLNNFLKEHAYSLSQISF) is activation peptide. N57 and N74 each carry an N-linked (GlcNAc...) asparagine glycan. A Peptidase A1 domain is found at 71–377 (YMGNITIGTP…DRGNDRIGLA (307 aa)). D89 is an active-site residue. A disulfide bond links C102 and C107. N-linked (GlcNAc...) asparagine glycans are attached at residues N125 and N182. C261 and C265 are disulfide-bonded. D270 is an active-site residue. A disulfide bond links C303 and C337.

The protein belongs to the peptidase A1 family. Post-translationally, N-Glycosylated; the glycans terminate in either N-acetyl-galactosamine (GalNAc) or N-acetyllactosamine. Terminal GalNAc on Asn-linked glycans is greatly reduced prior to parturition while lactosamine-type N-glycans remain unaltered. As to expression, trophoblast and placental tissue. Produced specifically in the invasive binucleate cells of the placenta. Becomes detectable in maternal serum soon after implantation.

Its subcellular location is the secreted. It is found in the extracellular space. In terms of biological role, appears to be proteolytically inactive. The polypeptide is Pregnancy-associated glycoprotein 1 (Bos taurus (Bovine)).